The chain runs to 126 residues: Small ribosomal subunit protein uS13 (126 aa).

The disordered stretch occupies residues 95–126; that stretch reads GLPVRGQRTQTNARTRKGKKKTVAGKKKAGRK. Positions 108-126 are enriched in basic residues; that stretch reads RTRKGKKKTVAGKKKAGRK.

Belongs to the universal ribosomal protein uS13 family. In terms of assembly, part of the 30S ribosomal subunit. Forms a loose heterodimer with protein S19. Forms two bridges to the 50S subunit in the 70S ribosome.

In terms of biological role, located at the top of the head of the 30S subunit, it contacts several helices of the 16S rRNA. In the 70S ribosome it contacts the 23S rRNA (bridge B1a) and protein L5 of the 50S subunit (bridge B1b), connecting the 2 subunits; these bridges are implicated in subunit movement. Contacts the tRNAs in the A and P-sites. The chain is Small ribosomal subunit protein uS13 from Thermobifida fusca (strain YX).